A 508-amino-acid polypeptide reads, in one-letter code: MVLLSELAAATLIFLTTHIFISTLLSITNGRRLPPGPRGWPVIGALPLLGAMPHVSLAKMAKKYGAIMYLKVGTCGMVVASTPDAAKAFLKTLDLNFSNRPPNAGATHLAYGAQDMVFAHYGPRWKLLRKLSNLHMLGGKALENWANVRANELGHMLKSMFDMSREGERVVVAEMLTFAMANMIGQVILSKRVFVNKGVEVNEFKDMVVELMTTAGYFNIGDFIPCLAWMDLQGIEKGMKRLHKKFDALLTKMFDEHKATSYERKGKPDFLDCVMENRDNSEGERLSTTNIKALLLNLFTAGTDTSSSAIEWALAEMMKNPAILKKAQGEMDQVIGNNRRLLESDIPNLPYLRAICKETFRKHPSTPLNLPRISNEPCIVDGYYIPKNTRLSVNIWAIGRDPEVWENPLEFYPERFLSGRNSKIDPRGNDFELIPFGAGRRICAGTRMGIVMVEYILGTLVHSFDWKLPSEVIELNMEEAFGLALQKAVPLEAMVTPRLPIDVYAPLA.

Residue cysteine 443 coordinates heme.

The protein belongs to the cytochrome P450 family. Heme is required as a cofactor. As to expression, flowers.

The protein resides in the microsome. It localises to the endoplasmic reticulum. The enzyme catalyses a 3',5'-unsubstituted flavanone + 2 reduced [NADPH--hemoprotein reductase] + 2 O2 = a 3',5'-dihydroxyflavanone + 2 oxidized [NADPH--hemoprotein reductase] + 2 H2O + 2 H(+). It functions in the pathway pigment biosynthesis; anthocyanin biosynthesis. Functionally, catalyzes the 3'5'-hydroxylation of naringenin and eriodictyol to form 5,7,3,'4',5'-pentahydroxyflavanone and 3',5'-hydroxylation of dihydrokaempferol and dihydroquercetin to form dihydromyricetin. This chain is Flavonoid 3',5'-hydroxylase 2 (CYP75A3), found in Petunia hybrida (Petunia).